The sequence spans 286 residues: Bifunctional protein FolD (286 aa).

Residues 165-167 (GRS), Ser-190, and Val-231 contribute to the NADP(+) site.

The protein belongs to the tetrahydrofolate dehydrogenase/cyclohydrolase family. Homodimer.

It carries out the reaction (6R)-5,10-methylene-5,6,7,8-tetrahydrofolate + NADP(+) = (6R)-5,10-methenyltetrahydrofolate + NADPH. The catalysed reaction is (6R)-5,10-methenyltetrahydrofolate + H2O = (6R)-10-formyltetrahydrofolate + H(+). Its pathway is one-carbon metabolism; tetrahydrofolate interconversion. Its function is as follows. Catalyzes the oxidation of 5,10-methylenetetrahydrofolate to 5,10-methenyltetrahydrofolate and then the hydrolysis of 5,10-methenyltetrahydrofolate to 10-formyltetrahydrofolate. This is Bifunctional protein FolD from Bacillus cereus (strain G9842).